Here is a 678-residue protein sequence, read N- to C-terminus: uncharacterized protein (678 aa).

Disordered regions lie at residues 123-156 (TPLS…TDSV) and 381-417 (TETT…TEHS).

The protein localises to the cytoplasm. This is an uncharacterized protein from Schizosaccharomyces pombe (strain 972 / ATCC 24843) (Fission yeast).